We begin with the raw amino-acid sequence, 320 residues long: TPR repeat-containing protein MJ0263 (320 aa).

TPR repeat units lie at residues 12–45 (ILKD…DKDN), 46–79 (PLVL…EGTS), 80–113 (LLSL…SKPC), 114–147 (YLSP…YPNL), 148–181 (TSIL…KKDD), 182–215 (AHAW…NENL), 216–249 (VHVY…FPND), 250–283 (VEAK…KNVK), and 289–320 (KSSI…DNNI).

The polypeptide is TPR repeat-containing protein MJ0263 (Methanocaldococcus jannaschii (strain ATCC 43067 / DSM 2661 / JAL-1 / JCM 10045 / NBRC 100440) (Methanococcus jannaschii)).